The sequence spans 127 residues: Protein HI_1253 (127 aa).

4 helical membrane passes run 13-33, 61-81, 82-102, and 107-127; these read VIML…LLVI, LIVS…WWLV, AKFA…SKKV, and SIFF…AYLK.

It belongs to the SirB2 family.

It localises to the cell inner membrane. The polypeptide is Protein HI_1253 (Haemophilus influenzae (strain ATCC 51907 / DSM 11121 / KW20 / Rd)).